The chain runs to 222 residues: Iodotyrosine deiodinase (222 aa).

FMN-binding positions include 34–38 (RRTVR) and 61–62 (PS). 3 residues coordinate 3-iodo-L-tyrosine: E91, Y95, and K116. FMN contacts are provided by residues 171–173 (THT) and R212.

The protein belongs to the nitroreductase family. In terms of assembly, homodimer. The cofactor is FMN.

It catalyses the reaction 2 iodide + L-tyrosine + 2 NADP(+) = 3,5-diiodo-L-tyrosine + 2 NADPH + H(+). The catalysed reaction is iodide + L-tyrosine + NADP(+) = 3-iodo-L-tyrosine + NADPH. The enzyme catalyses 3-iodo-L-tyrosine + iodide + NADP(+) = 3,5-diiodo-L-tyrosine + NADPH + H(+). It carries out the reaction L-tyrosine + chloride + NADP(+) = 3-chloro-L-tyrosine + NADPH. It catalyses the reaction bromide + L-tyrosine + NADP(+) = 3-bromo-L-tyrosine + NADPH. Its function is as follows. Catalyzes the dehalogenation of halotyrosines such as 3-iodo-L-tyrosine and 3,5-diiodo-L-tyrosine. Likely to also catalyze the dehalogenation of other halotyrosines such as 3-bromo-L-tyrosine, 3-chloro-L-tyrosine and 3-iodo-L-tyrosine. Activity towards 3-iodo-L-tyrosine is much stronger than activity towards 3,5-diiodo-L-tyrosine and 2-iodophenol. This chain is Iodotyrosine deiodinase, found in Haliscomenobacter hydrossis (strain ATCC 27775 / DSM 1100 / LMG 10767 / O).